Reading from the N-terminus, the 138-residue chain is MEEEEWSEEQQRFSYLQRLKAAVHYTVGCLCEEVASDKDMQFSKQTIAAISEVTFGQCENFAKDLEMFARHAKRSTINTEDVKLLARRSHSLLKYITEKNEDIAQLNLEKKAKKKKKLEDENRNSVESAEAGVEESEN.

Position 1 is an N-acetylmethionine (Met1). The interval Ala112 to Asn138 is disordered.

This sequence belongs to the TAF9 family. CENP-S/MHF1 subfamily. In terms of assembly, heterodimer with CENPX, sometimes called MHF; this interaction stabilizes both partners. MHF heterodimers can assemble to form tetrameric structures. MHF also coassemble with CENPT-CENPW heterodimers at centromeres to form the tetrameric CENP-T-W-S-X complex. Forms a discrete complex with FANCM and CENPX, called FANCM-MHF; this interaction, probably mediated by direct binding between CENPS and FANCM, leads to synergistic activation of double-stranded DNA binding and strongly stimulates FANCM-mediated DNA remodeling. Recruited by FANCM to the Fanconi anemia (FA) core complex, which consists of CENPS, CENPX, FANCA, FANCB, FANCC, FANCE, FANCF, FANCG, FANCL, FANCM, FAAP24 and FAAP100. The FA core complex associates with Bloom syndrome (BLM) complex, which consists of at least BLM, DNA topoisomerase 3-alpha (TOP3A), RMI1/BLAP75, RPA1/RPA70 and RPA2/RPA32. The super complex between FA and BLM is called BRAFT. Component of the CENPA-CAD complex, composed of CENPI, CENPK, CENPL, CENPO, CENPP, CENPQ, CENPR and CENPS. The CENPA-CAD complex is probably recruited on centromeres by the CENPA-NAC complex, at least composed of CENPA, CENPC, CENPH, CENPM, CENPN, CENPT and CENPU.

The protein localises to the nucleus. It localises to the chromosome. It is found in the centromere. Its subcellular location is the kinetochore. DNA-binding component of the Fanconi anemia (FA) core complex. Required for the normal activation of the FA pathway, leading to monoubiquitination of the FANCI-FANCD2 complex in response to DNA damage, cellular resistance to DNA cross-linking drugs, and prevention of chromosomal breakage. In complex with CENPX (MHF heterodimer), crucial cofactor for FANCM in both binding and ATP-dependent remodeling of DNA. Stabilizes FANCM. In complex with CENPX and FANCM (but not other FANC proteins), rapidly recruited to blocked forks and promotes gene conversion at blocked replication forks. In complex with CENPT, CENPW and CENPX (CENP-T-W-S-X heterotetramer), involved in the formation of a functional kinetochore outer plate, which is essential for kinetochore-microtubule attachment and faithful mitotic progression. As a component of MHF and CENP-T-W-S-X complexes, binds DNA and bends it to form a nucleosome-like structure. DNA-binding function is fulfilled in the presence of CENPX, with the following preference for DNA substates: Holliday junction &gt; double-stranded &gt; splay arm &gt; single-stranded. Does not bind DNA on its own. In Bos taurus (Bovine), this protein is Centromere protein S (CENPS).